Reading from the N-terminus, the 441-residue chain is Chitinase-like protein Idgf3 (441 aa).

The N-terminal stretch at 1–23 (MTGSLWLSLALSLAVLAQFKVSA) is a signal peptide. Residues 25–441 (PNLVCFYDSQ…MLRAIKYRLL (417 aa)) form the GH18 domain. Cys-29 and Cys-56 are oxidised to a cystine. A glycan (N-linked (GlcNAc...) asparagine) is linked at Asn-221. The interval 307 to 331 (KDSGDSGMPVVPSTQGPAPAGPQSK) is disordered. An intrachain disulfide couples Cys-342 to Cys-425.

The protein belongs to the glycosyl hydrolase 18 family. IDGF subfamily. Post-translationally, glycosylated. As to expression, primarily expressed in yolk cells and fat body. In larvae, it is expressed in small and large salivary gland cells, and weakly expressed in imaginal disks. Less expressed than Idgf2 and Idgf4.

Its subcellular location is the secreted. Its function is as follows. Cooperates with insulin-like peptides to stimulate the proliferation, polarization and motility of imaginal disk cells. May act by stabilizing the binding of insulin-like peptides to its receptor through a simultaneous interaction with both molecules to form a multiprotein signaling complex. The protein is Chitinase-like protein Idgf3 (Idgf3) of Drosophila melanogaster (Fruit fly).